The primary structure comprises 307 residues: Ribonuclease Z (307 aa).

Zn(2+) contacts are provided by His63, His65, Asp67, His68, His140, Asp211, and His269. The Proton acceptor role is filled by Asp67.

This sequence belongs to the RNase Z family. In terms of assembly, homodimer. Requires Zn(2+) as cofactor.

The catalysed reaction is Endonucleolytic cleavage of RNA, removing extra 3' nucleotides from tRNA precursor, generating 3' termini of tRNAs. A 3'-hydroxy group is left at the tRNA terminus and a 5'-phosphoryl group is left at the trailer molecule.. Zinc phosphodiesterase, which displays some tRNA 3'-processing endonuclease activity. Probably involved in tRNA maturation, by removing a 3'-trailer from precursor tRNA. The protein is Ribonuclease Z of Geobacillus kaustophilus (strain HTA426).